The sequence spans 569 residues: Hemin/hemoglobin-binding protein 2 (569 aa).

Residues 1–28 (MKKLWKKGLVAFLALTLIFQLIPGFASA) form the signal peptide. NEAT domains are found at residues 34–173 (KDGG…FKVI), 184–307 (LSDG…ATAA), and 360–484 (LNNH…IKDI). Heme contacts are provided by residues 204–205 (SS), Tyr280, and Tyr289. Positions 307–357 (ASSYPGSDETPPVVNPGETNPPVTKPDPGTTNPPVTTPPTTPSKPAVVDPK) are disordered. Residues 502 to 511 (TGNVASNNNA) show a composition bias toward polar residues. A disordered region spans residues 502–537 (TGNVASNNNAGPKLAKPDFDDTNSVQKTASKTEKNA). An NXZTN sorting signal motif is present at residues 536–540 (NAKTN). Thr539 bears the Pentaglycyl murein peptidoglycan amidated threonine mark. Positions 540 to 569 (NDSSSMVWYITLFGASFLYLAYRLKRKRLS) are cleaved as a propeptide — removed by sortase B.

The protein localises to the cell surface. The protein resides in the secreted. It is found in the cell wall. With respect to regulation, is overexpressed in mecA, clpC and clpP mutants, suggesting the protein level is controlled by MecA, ClpC and ClpP (at protein level). Acts as an extracellular and cell wall-bound hemophore; scavenges host heme and hemoglobin from the environment and also serves as a cell wall receptor for both. At low hemin (Hn) and hemoglobin (Hb) concentrations adsorbs Hn/Hb and presumably directs it to membrane transporters. Soluble Hbp2 can probably pass Hn/Hb to cell wall-anchored Hbp2, and both forms can accept Hn/Hb from Hbp1. May be involved in crossing the digestive barrier in infected animals. Binds host hemin. Binds host hemoglobin with affinity in the nanomolar range. This Listeria monocytogenes serovar 1/2a (strain ATCC BAA-679 / EGD-e) protein is Hemin/hemoglobin-binding protein 2.